A 184-amino-acid polypeptide reads, in one-letter code: Large ribosomal subunit protein uL6 (184 aa).

Belongs to the universal ribosomal protein uL6 family. In terms of assembly, part of the 50S ribosomal subunit.

This protein binds to the 23S rRNA, and is important in its secondary structure. It is located near the subunit interface in the base of the L7/L12 stalk, and near the tRNA binding site of the peptidyltransferase center. The protein is Large ribosomal subunit protein uL6 of Desulfurococcus amylolyticus (strain DSM 18924 / JCM 16383 / VKM B-2413 / 1221n) (Desulfurococcus kamchatkensis).